The sequence spans 137 residues: ATP synthase epsilon chain (137 aa).

It belongs to the ATPase epsilon chain family. In terms of assembly, F-type ATPases have 2 components, CF(1) - the catalytic core - and CF(0) - the membrane proton channel. CF(1) has five subunits: alpha(3), beta(3), gamma(1), delta(1), epsilon(1). CF(0) has three main subunits: a, b and c.

It is found in the cell inner membrane. In terms of biological role, produces ATP from ADP in the presence of a proton gradient across the membrane. In Pseudoalteromonas atlantica (strain T6c / ATCC BAA-1087), this protein is ATP synthase epsilon chain.